The sequence spans 511 residues: Sodium/hydrogen exchanger 9B1 (511 aa).

Over residues 1–10 (MHTTESKDEH) the composition is skewed to basic and acidic residues. The segment at 1–41 (MHTTESKDEHLEDENFQTSTTPQSLIDPNSTAHEETKTVIS) is disordered. Polar residues predominate over residues 16–31 (FQTSTTPQSLIDPNST). 13 helical membrane passes run 67 to 87 (IITNGVILFVIWCTTWSVLGS), 95 to 115 (LFGLLIIFCSAIIGGKILQLI), 116 to 136 (RIPLVPPLPPLLGMLLAGFTI), 152 to 172 (WSSILRSTALTVILIRAGLGL), 187 to 207 (LAVGPCLMEASAAAVFSHFIM), 215 to 235 (FLLGFVLGAVSPAIVVPSMMV), 260 to 280 (VLAITGFNTCLSIVFSSGGIV), 284 to 304 (IASIKSVSISLLAGIVLGFFV), 337 to 357 (IGLHGTGGLFTLVLSFIAGTK), 368 to 388 (IITNVWDIFQPLLFGLVGAEV), 398 to 418 (IGIFVATLSLALCVRILVTYI), 431 to 451 (IFIALAWMPKATVQAVLGPLV), and 472 to 492 (VAFLAILITAPNGALLMGILG).

Belongs to the monovalent cation:proton antiporter 1 (CPA1) transporter (TC 2.A.36) family.

Its subcellular location is the cell projection. It localises to the cilium. It is found in the flagellum membrane. Functionally, sperm-specific Na(+)/H(+) exchanger involved in intracellular pH regulation of spermatozoa. Involved in sperm motility and fertility. In Macaca fascicularis (Crab-eating macaque), this protein is Sodium/hydrogen exchanger 9B1 (SLC9B1).